Reading from the N-terminus, the 710-residue chain is Ent-copalyl diphosphate synthase 1 (710 aa).

Lys145 is a substrate binding site. Mg(2+) is bound by residues Asp277 and Asp279. Residues 277–280 (DIDD) carry the DXDD motif motif. Position 364 (Lys364) interacts with substrate.

Belongs to the terpene synthase family. Tpsc subfamily. Mg(2+) serves as cofactor. As to expression, expressed in germinating seeds and leaves.

It carries out the reaction (2E,6E,10E)-geranylgeranyl diphosphate = ent-copalyl diphosphate. The protein operates within plant hormone biosynthesis; gibberellin biosynthesis. It participates in secondary metabolite biosynthesis; terpenoid biosynthesis. Functionally, involved in the biosynthesis of ent-kaurene diterpenoids natural products such as oridonin, miltiradiene, eriocalyxin B and nezukol, known to exhibit antitumor, anti-inflammatory and antibacterial activities, and in the production of gibberellins phytohormones. Catalyzes the conversion of (2E,6E,10E)-geranylgeranyl diphosphate (GGPP) to ent-copalyl diphosphate (ent-CPP). In Isodon eriocalyx (Plectranthus eriocalyx), this protein is Ent-copalyl diphosphate synthase 1.